Reading from the N-terminus, the 220-residue chain is Octanoyltransferase (220 aa).

The BPL/LPL catalytic domain occupies 27–208 (PGTADEIWLC…QLARAHGQAV (182 aa)). Substrate contacts are provided by residues 66-73 (RGGQVTYH), 139-141 (ALG), and 152-154 (GLA). Cysteine 170 serves as the catalytic Acyl-thioester intermediate.

It belongs to the LipB family.

Its subcellular location is the cytoplasm. It catalyses the reaction octanoyl-[ACP] + L-lysyl-[protein] = N(6)-octanoyl-L-lysyl-[protein] + holo-[ACP] + H(+). The protein operates within protein modification; protein lipoylation via endogenous pathway; protein N(6)-(lipoyl)lysine from octanoyl-[acyl-carrier-protein]: step 1/2. Its function is as follows. Catalyzes the transfer of endogenously produced octanoic acid from octanoyl-acyl-carrier-protein onto the lipoyl domains of lipoate-dependent enzymes. Lipoyl-ACP can also act as a substrate although octanoyl-ACP is likely to be the physiological substrate. The polypeptide is Octanoyltransferase (Bordetella bronchiseptica (strain ATCC BAA-588 / NCTC 13252 / RB50) (Alcaligenes bronchisepticus)).